The sequence spans 413 residues: L-methionine gamma-lyase (413 aa).

Residues 75-77 and 105-106 each bind pyridoxal 5'-phosphate; these read YGR and GM. Tyr-131 contributes to the substrate binding site. 218–220 serves as a coordination point for pyridoxal 5'-phosphate; the sequence is SAT. Lys-221 carries the post-translational modification N6-(pyridoxal phosphate)lysine. A substrate-binding site is contributed by Arg-365. A disordered region spans residues 388–413; the sequence is RLPETAGAGREPSRTALRLPERAADR.

Belongs to the trans-sulfuration enzymes family. In terms of assembly, homotetramer; dimer of active dimers. Requires pyridoxal 5'-phosphate as cofactor.

The catalysed reaction is L-methionine + H2O = methanethiol + 2-oxobutanoate + NH4(+). The enzyme catalyses L-homocysteine + H2O = 2-oxobutanoate + hydrogen sulfide + NH4(+) + H(+). It catalyses the reaction L-cysteine + H2O = hydrogen sulfide + pyruvate + NH4(+) + H(+). Functionally, catalyzes the alpha,gamma-elimination of L-methionine to produce methanethiol, 2-oxobutanoate and ammonia. Is probably involved in L-methionine catabolism. Is also able to catalyze the alpha,gamma-elimination of L-homocysteine, and, to a lesser extent, the alpha,beta-elimination of L-cysteine. The chain is L-methionine gamma-lyase from Streptomyces avermitilis (strain ATCC 31267 / DSM 46492 / JCM 5070 / NBRC 14893 / NCIMB 12804 / NRRL 8165 / MA-4680).